A 213-amino-acid chain; its full sequence is Uridine kinase (213 aa).

Position 15 to 22 (15 to 22 (GASASGKS)) interacts with ATP.

This sequence belongs to the uridine kinase family.

The protein resides in the cytoplasm. It catalyses the reaction uridine + ATP = UMP + ADP + H(+). The enzyme catalyses cytidine + ATP = CMP + ADP + H(+). It functions in the pathway pyrimidine metabolism; CTP biosynthesis via salvage pathway; CTP from cytidine: step 1/3. Its pathway is pyrimidine metabolism; UMP biosynthesis via salvage pathway; UMP from uridine: step 1/1. The sequence is that of Uridine kinase from Salmonella paratyphi A (strain ATCC 9150 / SARB42).